We begin with the raw amino-acid sequence, 114 residues long: Snake venom vascular endothelial growth factor (114 aa).

Gln1 carries the pyrrolidone carboxylic acid modification. 3 cysteine pairs are disulfide-bonded: Cys14-Cys56, Cys45-Cys91, and Cys49-Cys93. The tract at residues 92–114 is disordered; that stretch reads ECRPGSTVNNGKRKKNPKEGEPR.

This sequence belongs to the PDGF/VEGF growth factor family. Snake venom VEGF subfamily. In terms of assembly, homodimer; disulfide-linked. Interacts with human VEGF receptor 1/FLT1. Interacts with human VEGF receptor 2/KDR. Expressed by venom gland.

It localises to the secreted. Snake venom vascular endothelial growth factor (svVEGF) that may contribute to venom dispersion and prey subjugation by inducing vascular permeability and hypotension. Induces an increase in capillary permeability after intradermal injection, as well as a drastic hypotensive effect after intravenous injection. The hypotension is mediated by nitric oxide (NO), which is produced by VEGF-activated endothelium NO synthase. Induces angiogenesis and migration of human vascular endothelial cells in vitro. Exhibits angiogenic activity by inducing human umbilical vein endothelial cells (HUVEC) to develop vessels in vitro. Induces cellular migration of HUVEC cells towards a wound in scratch assays, enhancing wound closure after 12 h by 49.5%. Induces dose-dependent leukocyte recruitment to the peritoneal cavity leading to increased vascular permeability in mice. This Crotalus durissus terrificus (South American rattlesnake) protein is Snake venom vascular endothelial growth factor.